Consider the following 591-residue polypeptide: MKKISLPKISIRPVIDGRRMGVRESLEEQTMNMAKATATLLTEKLRHACGAAVECVISDTCIAGMAEAAACEEKFSIQNVGLTITVTPCWCYGSETIDMDPTRPKAIWGFNGTERPGAVYLAAALAVHSQKGIPAFSIYGHDVQDADDTSIPADVEEKLLRFARAGLAVASMKGKSYLSLGGVSMGIAGSIVDHNFFESWLGMKVQAVDMTELRRRIDQKIYDEAELEMALTWADKNFRYGEDENNKQYQRNAEQSRAVLRESLLMAMCIRDMMQGNSKLADISRVEESLGYNAIAAGFQGQRHWTDQYPNGDTAEAILNSSFDWNGVREPLVVATENDSLNGVAMLMGHQLTGTAQVFADVRTYWSPEAIERVTGHKLDGLAEHGIIHLINSGSAALDGSCKQRDSEGNPTMKPHWKISQQEADACLAATEWCPAIHEYFRGGGYSSRFLTEGGVPFTMTRVNIIKGLGPVLQIAEGWSVELPKDVHDILNKRTNSTWPTTWFAPRLTGKGPFTDVYSVMANWGANHGVLTIGHVGADFITLAPMLRIPVCMHNVEETKVYRPSAWAAHGMDIEGQDYRACQNYGPLYKR.

Residues E337 and D361 each act as proton acceptor in the active site. Mn(2+)-binding residues include E337, D361, and H528.

The protein belongs to the L-fucose isomerase family. Homohexamer. Mn(2+) serves as cofactor.

It is found in the cytoplasm. It carries out the reaction L-fucose = L-fuculose. It participates in carbohydrate degradation; L-fucose degradation; L-lactaldehyde and glycerone phosphate from L-fucose: step 1/3. Converts the aldose L-fucose into the corresponding ketose L-fuculose. This is L-fucose isomerase from Shigella dysenteriae serotype 1 (strain Sd197).